The following is a 501-amino-acid chain: Sarpagan bridge enzyme (501 aa).

A helical; Signal-anchor for type II membrane protein membrane pass occupies residues 3 to 23 (VMQLSFSYPALFLFVFFLFML). Position 441 (C441) interacts with heme.

This sequence belongs to the cytochrome P450 family. The cofactor is heme. As to expression, highly expressed in roots. Expressed at low levels in stems.

The protein localises to the endoplasmic reticulum membrane. The catalysed reaction is (19E)-geissoschizine + reduced [NADPH--hemoprotein reductase] + O2 = polyneuridine aldehyde + oxidized [NADPH--hemoprotein reductase] + 2 H2O + H(+). It carries out the reaction tetrahydroalstonine + A + reduced [NADPH--hemoprotein reductase] + O2 = alstonine + AH2 + oxidized [NADPH--hemoprotein reductase] + 2 H2O + H(+). The enzyme catalyses ajmalicine + A + reduced [NADPH--hemoprotein reductase] + O2 = serpentine + AH2 + oxidized [NADPH--hemoprotein reductase] + 2 H2O + H(+). It participates in alkaloid biosynthesis; ajmaline biosynthesis. Its function is as follows. Monooxygenase involved in the biosynthesis of ajmaline-type monoterpenoid indole alkaloids (MIAs) natural products, important plant-derived pharmaceuticals used in the therapy of heart disorders. Converts by cyclization the strictosidine-derived geissoschizine to the sarpagan alkaloid polyneuridine aldehyde, precursor of vomilenine, an intermediate chemical in the biosynthesis of ajmaline. Converts by aromatization the tetrahydro-beta-carboline alkaloids tetrahydroalstonine and ajmalicine to the corresponding beta-carboline alkaloids alstonine and serpentine, respectively. This chain is Sarpagan bridge enzyme, found in Gelsemium sempervirens (Carolina jasmine).